We begin with the raw amino-acid sequence, 320 residues long: Cyclin-H (320 aa).

Residue Ser-5 is modified to Phosphoserine; by CDK8. Ser-132 carries the phosphoserine modification. Residue Ser-304 is modified to Phosphoserine; by CDK8.

Belongs to the cyclin family. Cyclin C subfamily. In terms of assembly, associates primarily with CDK7 and MAT1 to form the CAK complex. CAK can further associate with the core-TFIIH to form the TFIIH basal transcription factor.

Its subcellular location is the nucleus. Regulates CDK7, the catalytic subunit of the CDK-activating kinase (CAK) enzymatic complex. CAK activates the cyclin-associated kinases CDK1, CDK2, CDK4 and CDK6 by threonine phosphorylation. CAK complexed to the core-TFIIH basal transcription factor activates RNA polymerase II by serine phosphorylation of the repetitive C-terminal domain (CTD) of its large subunit (POLR2A), allowing its escape from the promoter and elongation of the transcripts. Involved in cell cycle control and in RNA transcription by RNA polymerase II. Its expression and activity are constant throughout the cell cycle. The polypeptide is Cyclin-H (CCNH) (Bos taurus (Bovine)).